We begin with the raw amino-acid sequence, 452 residues long: Membrane-bound lytic murein transglycosylase D (452 aa).

Residues 1–15 (MKAKAILLASVLLVG) form the signal peptide. Cys-16 carries the N-palmitoyl cysteine lipid modification. Cys-16 carries S-diacylglycerol cysteine lipidation. The segment at 113-198 (NMPMELVLLP…LLTVAAYNSG (86 aa)) is slt-type domain. The active site involves Glu-125. LysM domains follow at residues 341-384 (RVYT…SLTI) and 400-448 (ITYR…KNNN).

Belongs to the transglycosylase Slt family.

The protein resides in the cell membrane. It carries out the reaction Exolytic cleavage of the (1-&gt;4)-beta-glycosidic linkage between N-acetylmuramic acid (MurNAc) and N-acetylglucosamine (GlcNAc) residues in peptidoglycan, from either the reducing or the non-reducing ends of the peptidoglycan chains, with concomitant formation of a 1,6-anhydrobond in the MurNAc residue.. In terms of biological role, murein-degrading enzyme. May play a role in recycling of muropeptides during cell elongation and/or cell division. The polypeptide is Membrane-bound lytic murein transglycosylase D (mltD) (Escherichia coli O6:H1 (strain CFT073 / ATCC 700928 / UPEC)).